Consider the following 449-residue polypeptide: Tubulin beta-8 chain (449 aa).

Glutamine 11, glutamate 69, serine 138, glycine 142, threonine 143, glycine 144, asparagine 204, and asparagine 226 together coordinate GTP. Glutamate 69 is a binding site for Mg(2+). The segment at 428–449 (ATADEEEGYEYEEDEVEVQEEQ) is disordered. The segment covering 429-449 (TADEEEGYEYEEDEVEVQEEQ) has biased composition (acidic residues).

This sequence belongs to the tubulin family. In terms of assembly, dimer of alpha and beta chains. A typical microtubule is a hollow water-filled tube with an outer diameter of 25 nm and an inner diameter of 15 nM. Alpha-beta heterodimers associate head-to-tail to form protofilaments running lengthwise along the microtubule wall with the beta-tubulin subunit facing the microtubule plus end conferring a structural polarity. Microtubules usually have 13 protofilaments but different protofilament numbers can be found in some organisms and specialized cells. Requires Mg(2+) as cofactor.

Its subcellular location is the cytoplasm. The protein resides in the cytoskeleton. Tubulin is the major constituent of microtubules, a cylinder consisting of laterally associated linear protofilaments composed of alpha- and beta-tubulin heterodimers. Microtubules grow by the addition of GTP-tubulin dimers to the microtubule end, where a stabilizing cap forms. Below the cap, tubulin dimers are in GDP-bound state, owing to GTPase activity of alpha-tubulin. This Arabidopsis thaliana (Mouse-ear cress) protein is Tubulin beta-8 chain (TUBB8).